Here is a 141-residue protein sequence, read N- to C-terminus: Pancreatic progenitor cell differentiation and proliferation factor-like protein (141 aa).

The segment at Asp-72–Gln-141 is disordered. Positions Ser-95–Leu-105 are enriched in low complexity. Over residues Gly-112 to Thr-122 the composition is skewed to polar residues.

The protein belongs to the PPDPF family.

The sequence is that of Pancreatic progenitor cell differentiation and proliferation factor-like protein from Bos taurus (Bovine).